Reading from the N-terminus, the 207-residue chain is MPKVALYNQTGSQVGEIDLADSVFGIEPNSAVLYDAIVMQQASQRQGTHDVKNRSEVRGGGRKPWRQKGTGRARQGSIRSPQWKGGGVVFGPTPRKYGYKLNRKVRRLALKSALSTKVQNNELLVLEALNFAAPKTKEMTAVLSSLKVDRKVLIVTSEYDQNVALASRNIPGTKIVDAAGINVLDLVAHDKVIVTREAVAKVEEVLA.

The disordered stretch occupies residues 44–78 (QRQGTHDVKNRSEVRGGGRKPWRQKGTGRARQGSI). The span at 47–59 (GTHDVKNRSEVRG) shows a compositional bias: basic and acidic residues. Basic residues predominate over residues 60-71 (GGRKPWRQKGTG).

The protein belongs to the universal ribosomal protein uL4 family. In terms of assembly, part of the 50S ribosomal subunit.

One of the primary rRNA binding proteins, this protein initially binds near the 5'-end of the 23S rRNA. It is important during the early stages of 50S assembly. It makes multiple contacts with different domains of the 23S rRNA in the assembled 50S subunit and ribosome. Functionally, forms part of the polypeptide exit tunnel. This Brevibacillus brevis (strain 47 / JCM 6285 / NBRC 100599) protein is Large ribosomal subunit protein uL4.